The primary structure comprises 497 residues: B3 domain-containing protein REM1 (497 aa).

3 consecutive DNA-binding regions (TF-B3) follow at residues 7–92, 142–239, and 278–379; these read PSLF…SSES, FLRA…LCSH, and FLTQ…HSKI. The disordered stretch occupies residues 87–135; the sequence is AVSSESDDDESDDTDDSESDDESNDTDDSESDDSEDNGEGDSSLVNKEA. Acidic residues predominate over residues 91–125; it reads ESDDDESDDTDDSESDDESNDTDDSESDDSEDNGE.

Specifically expressed in the reproductive meristem.

It is found in the nucleus. May play a role in flower development. In Brassica oleracea var. botrytis (Cauliflower), this protein is B3 domain-containing protein REM1 (REM1).